Reading from the N-terminus, the 592-residue chain is Aspartate--tRNA(Asp/Asn) ligase (592 aa).

Glu-175 provides a ligand contact to L-aspartate. Positions 199-202 (QQFK) are aspartate. L-aspartate is bound by residues Arg-221 and His-451. Residue 221-223 (RDE) coordinates ATP. Position 485 (Glu-485) interacts with ATP. Arg-492 serves as a coordination point for L-aspartate. Residue 537–540 (GIDR) participates in ATP binding.

It belongs to the class-II aminoacyl-tRNA synthetase family. Type 1 subfamily. Homodimer.

It localises to the cytoplasm. The enzyme catalyses tRNA(Asx) + L-aspartate + ATP = L-aspartyl-tRNA(Asx) + AMP + diphosphate. In terms of biological role, aspartyl-tRNA synthetase with relaxed tRNA specificity since it is able to aspartylate not only its cognate tRNA(Asp) but also tRNA(Asn). Reaction proceeds in two steps: L-aspartate is first activated by ATP to form Asp-AMP and then transferred to the acceptor end of tRNA(Asp/Asn). This is Aspartate--tRNA(Asp/Asn) ligase from Phenylobacterium zucineum (strain HLK1).